The chain runs to 204 residues: Urease accessory protein UreG 1 (204 aa).

Position 14 to 21 (14 to 21 (GPVGSGKT)) interacts with GTP.

Belongs to the SIMIBI class G3E GTPase family. UreG subfamily. As to quaternary structure, homodimer. UreD, UreF and UreG form a complex that acts as a GTP-hydrolysis-dependent molecular chaperone, activating the urease apoprotein by helping to assemble the nickel containing metallocenter of UreC. The UreE protein probably delivers the nickel.

It is found in the cytoplasm. Facilitates the functional incorporation of the urease nickel metallocenter. This process requires GTP hydrolysis, probably effectuated by UreG. The protein is Urease accessory protein UreG 1 of Methylorubrum extorquens (strain PA1) (Methylobacterium extorquens).